A 532-amino-acid polypeptide reads, in one-letter code: Calnexin homolog 2 (532 aa).

The signal sequence occupies residues 1 to 25; it reads MRERIITFVSLLLVALLSFPSVSYC. Residues 26–468 are Lumenal-facing; the sequence is DDQTILYESF…EKAETQPNLT (443 aa). The Ca(2+) site is built by Ser-34 and Asp-65. Cysteines 110 and 145 form a disulfide. An alpha-D-glucoside is bound by residues Tyr-114, Lys-116, Tyr-136, and Asp-143. The interval 208 to 302 is disordered; that stretch reads NLLSAEDFEP…DEEDGEWEAP (95 aa). The interval 225–358 is p domain (Extended arm); sequence IPDPEDKKPE…RDIPNPDYFE (134 aa). Positions 226 to 242 are enriched in basic and acidic residues; sequence PDPEDKKPEDWDERAKI. 5 consecutive repeat copies span residues 227 to 238, 244 to 255, 263 to 274, 282 to 293, and 297 to 307. 4 X approximate repeats regions lie at residues 227 to 293 and 297 to 354; these read DPED…DWDD and GEWE…IPNP. Acidic residues-rich tracts occupy residues 252-283 and 290-299; these read DWDE…VEDP and DWDDEEDGEW. The cysteines at positions 309 and 315 are disulfide-linked. Tandem repeats lie at residues 316–326, 330–340, and 344–354. Glu-373 is an an alpha-D-glucoside binding site. Asp-384 provides a ligand contact to Ca(2+). An N-linked (GlcNAc...) asparagine glycan is attached at Asn-466. The helical transmembrane segment at 469 to 489 threads the bilayer; the sequence is IGVLISIVIVFLSLFFKLIFG. Residues 490 to 532 are Cytoplasmic-facing; the sequence is GAKAKVEKKKPETAAETSTSEAKTEEKAEAVAAPRKRQTRRES. The interval 493-532 is disordered; the sequence is AKVEKKKPETAAETSTSEAKTEEKAEAVAAPRKRQTRRES. Over residues 523-532 the composition is skewed to basic residues; that stretch reads PRKRQTRRES.

The protein belongs to the calreticulin family.

It localises to the endoplasmic reticulum membrane. Its function is as follows. Calcium-binding protein that interacts with newly synthesized monoglucosylated glycoproteins in the endoplasmic reticulum. It may act in assisting protein assembly and/or in the retention within the ER of unassembled protein subunits. It seems to play a major role in the quality control apparatus of the ER by the retention of incorrectly folded proteins. The chain is Calnexin homolog 2 from Arabidopsis thaliana (Mouse-ear cress).